Reading from the N-terminus, the 642-residue chain is Threonine--tRNA ligase (642 aa).

One can recognise a TGS domain in the interval 1 to 61 (MPVITLPDGS…DTDSELSIIT (61 aa)). A catalytic region spans residues 243-534 (DHRKIGKQLD…LIEEYAGKFP (292 aa)). Zn(2+)-binding residues include C334, H385, and H511.

The protein belongs to the class-II aminoacyl-tRNA synthetase family. As to quaternary structure, homodimer. Zn(2+) serves as cofactor.

The protein localises to the cytoplasm. The catalysed reaction is tRNA(Thr) + L-threonine + ATP = L-threonyl-tRNA(Thr) + AMP + diphosphate + H(+). Catalyzes the attachment of threonine to tRNA(Thr) in a two-step reaction: L-threonine is first activated by ATP to form Thr-AMP and then transferred to the acceptor end of tRNA(Thr). Also edits incorrectly charged L-seryl-tRNA(Thr). This Shewanella piezotolerans (strain WP3 / JCM 13877) protein is Threonine--tRNA ligase.